We begin with the raw amino-acid sequence, 517 residues long: L-amino-acid oxidase (517 aa).

The signal sequence occupies residues 1–18; that stretch reads MNVFFMFSLLFLAALESC. Residues cysteine 29 and cysteine 192 are joined by a disulfide bond. FAD-binding positions include 62-63, 82-83, arginine 90, and 106-109; these read MA, EA, and GPMR. Arginine 109 is a substrate binding site. A glycan (N-linked (GlcNAc...) asparagine) is linked at asparagine 191. Position 280 (valine 280) interacts with FAD. The cysteines at positions 350 and 431 are disulfide-linked. Tyrosine 391 lines the substrate pocket. FAD contacts are provided by residues glutamate 476 and 483–488; that span reads GWIDST. Residue 483–484 coordinates substrate; it reads GW.

It belongs to the flavin monoamine oxidase family. FIG1 subfamily. As to quaternary structure, homodimer; non-covalently linked. Requires FAD as cofactor. N-glycosylated. As to expression, expressed by the venom gland.

It localises to the secreted. It catalyses the reaction an L-alpha-amino acid + O2 + H2O = a 2-oxocarboxylate + H2O2 + NH4(+). Its function is as follows. Catalyzes an oxidative deamination of predominantly hydrophobic and aromatic L-amino acids, thus producing hydrogen peroxide that may contribute to the diverse toxic effects of this enzyme. Exhibits diverse biological activities, such as hemorrhage, hemolysis, edema, apoptosis of vascular endothelial cells or tumor cell lines, antibacterial and antiparasitic activities, as well as regulation of platelet aggregation. Its effect on platelets is controversial, since it either induces aggregation or inhibits agonist-induced aggregation. These different effects are probably due to different experimental conditions. This is L-amino-acid oxidase from Demansia vestigiata (Lesser black whip snake).